We begin with the raw amino-acid sequence, 211 residues long: Large ribosomal subunit protein eL13 (211 aa).

Belongs to the eukaryotic ribosomal protein eL13 family. As to quaternary structure, component of the 60S large ribosomal subunit (LSU).

The protein localises to the cytoplasm. Functionally, component of the ribosome, a large ribonucleoprotein complex responsible for the synthesis of proteins in the cell. The small ribosomal subunit (SSU) binds messenger RNAs (mRNAs) and translates the encoded message by selecting cognate aminoacyl-transfer RNA (tRNA) molecules. The large subunit (LSU) contains the ribosomal catalytic site termed the peptidyl transferase center (PTC), which catalyzes the formation of peptide bonds, thereby polymerizing the amino acids delivered by tRNAs into a polypeptide chain. The nascent polypeptides leave the ribosome through a tunnel in the LSU and interact with protein factors that function in enzymatic processing, targeting, and the membrane insertion of nascent chains at the exit of the ribosomal tunnel. As part of the LSU, it is probably required for its formation and the maturation of rRNAs. This Gallus gallus (Chicken) protein is Large ribosomal subunit protein eL13 (RPL13).